We begin with the raw amino-acid sequence, 139 residues long: uncharacterized protein (139 aa).

Positions 1–133 constitute a Globin domain; it reads MLSEETIRVI…LAKTLITLEK (133 aa).

The protein belongs to the globin family.

This is an uncharacterized protein from Aquifex aeolicus (strain VF5).